A 217-amino-acid chain; its full sequence is Pyrophosphatase PpaX (217 aa).

D11 serves as the catalytic Nucleophile.

This sequence belongs to the HAD-like hydrolase superfamily. PpaX family. Mg(2+) serves as cofactor.

The enzyme catalyses diphosphate + H2O = 2 phosphate + H(+). Hydrolyzes pyrophosphate formed during P-Ser-HPr dephosphorylation by HPrK/P. Might play a role in controlling the intracellular pyrophosphate pool. The polypeptide is Pyrophosphatase PpaX (Listeria innocua serovar 6a (strain ATCC BAA-680 / CLIP 11262)).